Here is a 603-residue protein sequence, read N- to C-terminus: DNA ligase (603 aa).

Glu-262 serves as a coordination point for ATP. Catalysis depends on Lys-264, which acts as the N6-AMP-lysine intermediate. The ATP site is built by Arg-269, Arg-285, Glu-315, Phe-355, Arg-432, and Lys-438.

It belongs to the ATP-dependent DNA ligase family. Mg(2+) is required as a cofactor.

The enzyme catalyses ATP + (deoxyribonucleotide)n-3'-hydroxyl + 5'-phospho-(deoxyribonucleotide)m = (deoxyribonucleotide)n+m + AMP + diphosphate.. Functionally, DNA ligase that seals nicks in double-stranded DNA during DNA replication, DNA recombination and DNA repair. The chain is DNA ligase from Caldivirga maquilingensis (strain ATCC 700844 / DSM 13496 / JCM 10307 / IC-167).